A 570-amino-acid chain; its full sequence is Peptidyl-prolyl cis-trans isomerase FKBP9 (570 aa).

The first 24 residues, 1–24, serve as a signal peptide directing secretion; the sequence is MAFGARGWRRWSLLLLLLWVTGQA. 4 consecutive PPIase FKBP-type domains span residues 54–142, 166–254, 278–365, and 389–477; these read GDFV…VDIW, SDFV…LDLH, GDFL…IDFH, and GDYL…LELV. Residues N174, N286, N302, and N397 are each glycosylated (N-linked (GlcNAc...) asparagine). EF-hand domains follow at residues 488 to 523 and 533 to 568; these read WNGE…QVAS and NAEM…TKHD. The Ca(2+) site is built by D501, D503, N505, E507, E512, D546, N548, D550, K552, and E557. The Prevents secretion from ER motif lies at 567 to 570; that stretch reads HDEL.

In terms of processing, phosphorylated.

It localises to the endoplasmic reticulum lumen. It catalyses the reaction [protein]-peptidylproline (omega=180) = [protein]-peptidylproline (omega=0). Inhibited by FK506. Its function is as follows. PPIases accelerate the folding of proteins during protein synthesis. The protein is Peptidyl-prolyl cis-trans isomerase FKBP9 (Fkbp9) of Rattus norvegicus (Rat).